We begin with the raw amino-acid sequence, 32 residues long: Conotoxin pr6d (32 aa).

Pro-5 carries the 4-hydroxyproline modification. Cystine bridges form between Cys-7–Cys-20, Cys-14–Cys-25, and Cys-19–Cys-30.

Expressed by the venom duct.

It is found in the secreted. The sequence is that of Conotoxin pr6d from Conus parius (Cone snail).